The sequence spans 356 residues: MAGLKLQAVTKSWGGKTQVIQPLTLDVADGEFIVMVGPSGCGKSTLLRMVAGLERVTSGDIWIDRKRVTEMEPKDRGIAMVFQNYALYPHMSVEENMAWGLKIRGMSKAHIEERVREAARILELDGLLKRRPRELSGGQRQRVAMGRAIVREPAVFLFDEPLSNLDAKLRVQMRLELQHLHRRLRTTSLYVTHDQVEAMTLAQRVMVMNKGVAEQIGTPVEVYEKPASRFVASFIGSPAMNLLDGVISASGDRFELPGGLALPIGAGYRGHAGRKMTLGIRPEHIALSSQAEGGVPLTVDTLEILGADNLAHGRWGDQKLVVRLAHQQRPAAGSTLWLRLPEHQRHLFDGETGQRV.

The ABC transporter domain maps to 4 to 235 (LKLQAVTKSW…PASRFVASFI (232 aa)). 37–44 (GPSGCGKS) provides a ligand contact to ATP.

This sequence belongs to the ABC transporter superfamily. sn-glycerol-3-phosphate importer (TC 3.A.1.1.3) family. In terms of assembly, the complex is composed of two ATP-binding proteins (UgpC), two transmembrane proteins (UgpA and UgpE) and a solute-binding protein (UgpB).

It localises to the cell inner membrane. It carries out the reaction sn-glycerol 3-phosphate(out) + ATP + H2O = sn-glycerol 3-phosphate(in) + ADP + phosphate + H(+). Its function is as follows. Part of the ABC transporter complex UgpBAEC involved in sn-glycerol-3-phosphate (G3P) import. Responsible for energy coupling to the transport system. The protein is sn-glycerol-3-phosphate import ATP-binding protein UgpC of Salmonella typhi.